The sequence spans 307 residues: UDP-N-acetylenolpyruvoylglucosamine reductase (307 aa).

In terms of domain architecture, FAD-binding PCMH-type spans 34–198; that stretch reads LGGKADVYIT…LEATFALKKA (165 aa). Arg177 is a catalytic residue. The active-site Proton donor is the Ser227. Residue Glu297 is part of the active site.

Belongs to the MurB family. It depends on FAD as a cofactor.

The protein resides in the cytoplasm. It catalyses the reaction UDP-N-acetyl-alpha-D-muramate + NADP(+) = UDP-N-acetyl-3-O-(1-carboxyvinyl)-alpha-D-glucosamine + NADPH + H(+). The protein operates within cell wall biogenesis; peptidoglycan biosynthesis. Functionally, cell wall formation. This is UDP-N-acetylenolpyruvoylglucosamine reductase from Oceanobacillus iheyensis (strain DSM 14371 / CIP 107618 / JCM 11309 / KCTC 3954 / HTE831).